The primary structure comprises 402 residues: Argininosuccinate synthase (402 aa).

Residues 10-18 and Ala-38 contribute to the ATP site; that span reads AYSGGVDTS. Tyr-89 contacts L-citrulline. An ATP-binding site is contributed by Gly-119. Residues Thr-121, Asn-125, and Asp-126 each contribute to the L-aspartate site. Asn-125 contributes to the L-citrulline binding site. The L-citrulline site is built by Arg-129, Ser-177, Ser-186, Glu-262, and Tyr-274.

The protein belongs to the argininosuccinate synthase family. Type 1 subfamily. Homotetramer.

It is found in the cytoplasm. It carries out the reaction L-citrulline + L-aspartate + ATP = 2-(N(omega)-L-arginino)succinate + AMP + diphosphate + H(+). It functions in the pathway amino-acid biosynthesis; L-arginine biosynthesis; L-arginine from L-ornithine and carbamoyl phosphate: step 2/3. The protein is Argininosuccinate synthase of Prochlorococcus marinus (strain SARG / CCMP1375 / SS120).